The primary structure comprises 346 residues: Low specificity L-threonine aldolase (346 aa).

At Lys207 the chain carries N6-(pyridoxal phosphate)lysine.

This sequence belongs to the threonine aldolase family. As to quaternary structure, homotetramer. The cofactor is pyridoxal 5'-phosphate.

The enzyme catalyses L-threonine = acetaldehyde + glycine. It catalyses the reaction L-allo-threonine = acetaldehyde + glycine. In terms of biological role, catalyzes the cleavage of L-allo-threonine and L-threonine to glycine and acetaldehyde. This is Low specificity L-threonine aldolase (ltaE) from Pseudomonas aeruginosa (strain ATCC 15692 / DSM 22644 / CIP 104116 / JCM 14847 / LMG 12228 / 1C / PRS 101 / PAO1).